Reading from the N-terminus, the 64-residue chain is MKAKEITALTTAEMLDKEKQYKEELFNLRFQQATGQLENTARLSQVRKNIARIKTVLRQQALNK.

This sequence belongs to the universal ribosomal protein uL29 family.

The chain is Large ribosomal subunit protein uL29 from Lacticaseibacillus paracasei (strain ATCC 334 / BCRC 17002 / CCUG 31169 / CIP 107868 / KCTC 3260 / NRRL B-441) (Lactobacillus paracasei).